We begin with the raw amino-acid sequence, 228 residues long: Triosephosphate isomerase (228 aa).

11–13 (NFK) is a binding site for substrate. The Electrophile role is filled by His-95. Catalysis depends on Glu-143, which acts as the Proton acceptor. Substrate-binding positions include Ile-148, Gly-183, and 204 to 205 (AS).

This sequence belongs to the triosephosphate isomerase family. As to quaternary structure, homotetramer; dimer of dimers.

The protein localises to the cytoplasm. The enzyme catalyses D-glyceraldehyde 3-phosphate = dihydroxyacetone phosphate. It functions in the pathway carbohydrate biosynthesis; gluconeogenesis. It participates in carbohydrate degradation; glycolysis; D-glyceraldehyde 3-phosphate from glycerone phosphate: step 1/1. In terms of biological role, involved in the gluconeogenesis. Catalyzes stereospecifically the conversion of dihydroxyacetone phosphate (DHAP) to D-glyceraldehyde-3-phosphate (G3P). In Pyrococcus horikoshii (strain ATCC 700860 / DSM 12428 / JCM 9974 / NBRC 100139 / OT-3), this protein is Triosephosphate isomerase.